Reading from the N-terminus, the 335-residue chain is Dihydroorotate dehydrogenase (quinone) (335 aa).

FMN is bound by residues 59–63 and Thr-83; that span reads AGLDK. Position 63 (Lys-63) interacts with substrate. 108–112 is a substrate binding site; it reads NRMGF. Residues Asn-136 and Asn-169 each coordinate FMN. Asn-169 contacts substrate. Ser-172 (nucleophile) is an active-site residue. Asn-174 contacts substrate. 2 residues coordinate FMN: Lys-214 and Thr-242. A substrate-binding site is contributed by 243-244; that stretch reads NT. Residues Gly-265, Gly-294, and 315–316 each bind FMN; that span reads YS.

Belongs to the dihydroorotate dehydrogenase family. Type 2 subfamily. In terms of assembly, monomer. Requires FMN as cofactor.

The protein localises to the cell membrane. The catalysed reaction is (S)-dihydroorotate + a quinone = orotate + a quinol. It participates in pyrimidine metabolism; UMP biosynthesis via de novo pathway; orotate from (S)-dihydroorotate (quinone route): step 1/1. Catalyzes the conversion of dihydroorotate to orotate with quinone as electron acceptor. The chain is Dihydroorotate dehydrogenase (quinone) from Neisseria meningitidis serogroup A / serotype 4A (strain DSM 15465 / Z2491).